Reading from the N-terminus, the 678-residue chain is ATP-dependent RNA helicase DHX58 (678 aa).

Residues 11–188 (ILPALEGKNI…QGAIDHILQL (178 aa)) form the Helicase ATP-binding domain. Residue 24-31 (LPTGAGKT) participates in ATP binding. The DECH box motif lies at 131–134 (DECH). The Helicase C-terminal domain occupies 353-514 (MLERILLKQF…KAVAAVQKMD (162 aa)). Positions 489 to 546 (EMKRELTNEALEVLMEKAVAAVQKMDPDEFKAKIRDLQQASLVKRAARAAHREIQQGQ) form a coiled coil. One can recognise an RLR CTR domain in the interval 542 to 669 (IQQGQFLPEH…PVFDILQDCT (128 aa)). Zn(2+) is bound by residues Cys556, Cys559, Cys612, and Cys615. The segment at 572–655 (VEGTHHVNVN…KIQAKKWSRV (84 aa)) is RNA-binding.

The protein belongs to the helicase family. RLR subfamily. As to quaternary structure, monomer in the absence of dsRNA. Homodimer in the presence of dsRNA. Interacts with RIGI (via CARD domain), MAVS/IPS1 and DDX60. Found in a complex with RIGI and IFIH1/MDA5. Interacts with ANKRD17. Directly interacts with ATG5 and ATG12, either as ATG5 and ATG12 monomers or as ATG12-ATG5 conjugates. As to expression, highly expressed in mammary tissues. Expressed in liver and testis. Expressed at lower level in spleen, embryo, mammary gland and breast tumors.

The protein localises to the cytoplasm. The enzyme catalyses ATP + H2O = ADP + phosphate + H(+). In terms of biological role, acts as a regulator of RIGI and IFIH1/MDA5 mediated antiviral signaling. Cannot initiate antiviral signaling as it lacks the CARD domain required for activating MAVS/IPS1-dependent signaling events. Can have both negative and positive regulatory functions related to RIGI and IFIH1/MDA5 signaling and this role in regulating signaling may be complex and could probably depend on characteristics of the infecting virus or target cells, or both. Its inhibitory action on RIG-I signaling may involve the following mechanisms: competition with RIGI for binding to the viral RNA, binding to RIGI and inhibiting its dimerization and interaction with MAVS/IPS1, competing with IKBKE in its binding to MAVS/IPS1 thereby inhibiting activation of interferon regulatory factor 3 (IRF3). Its positive regulatory role may involve unwinding or stripping nucleoproteins of viral RNA thereby facilitating their recognition by RIGI and IFIH1/MDA5. Involved in the innate immune response to various RNA viruses and some DNA viruses such as poxviruses, and also to the bacterial pathogen Listeria monocytogenes. Can bind both ssRNA and dsRNA, with a higher affinity for dsRNA. Shows a preference to 5'-triphosphorylated RNA, although it can recognize RNA lacking a 5'-triphosphate. The chain is ATP-dependent RNA helicase DHX58 from Mus musculus (Mouse).